The chain runs to 388 residues: Ribosomal RNA large subunit methyltransferase F (388 aa).

Residues 1–22 (MKTNNHNAKQAQTKTAKSNPSK) are compositionally biased toward polar residues. The disordered stretch occupies residues 1–51 (MKTNNHNAKQAQTKTAKSNPSKEVTKIKPKRVKNKPTAKAAKSTGLKTNAA). Positions 27–36 (IKPKRVKNKP) are enriched in basic residues.

This sequence belongs to the methyltransferase superfamily. METTL16/RlmF family.

It localises to the cytoplasm. It catalyses the reaction adenosine(1618) in 23S rRNA + S-adenosyl-L-methionine = N(6)-methyladenosine(1618) in 23S rRNA + S-adenosyl-L-homocysteine + H(+). Its function is as follows. Specifically methylates the adenine in position 1618 of 23S rRNA. The sequence is that of Ribosomal RNA large subunit methyltransferase F from Vibrio campbellii (strain ATCC BAA-1116).